A 382-amino-acid polypeptide reads, in one-letter code: Dual-specificity RNA methyltransferase RlmN (382 aa).

Glutamate 91 functions as the Proton acceptor in the catalytic mechanism. One can recognise a Radical SAM core domain in the interval 97-339 (ETDRGTLCIS…TTVRKTRGDD (243 aa)). Residues cysteine 104 and cysteine 344 are joined by a disulfide bond. [4Fe-4S] cluster contacts are provided by cysteine 111, cysteine 115, and cysteine 118. Residues 165–166 (GE), serine 197, 219–221 (SLH), and asparagine 301 contribute to the S-adenosyl-L-methionine site. The active-site S-methylcysteine intermediate is cysteine 344.

This sequence belongs to the radical SAM superfamily. RlmN family. Requires [4Fe-4S] cluster as cofactor.

Its subcellular location is the cytoplasm. The enzyme catalyses adenosine(2503) in 23S rRNA + 2 reduced [2Fe-2S]-[ferredoxin] + 2 S-adenosyl-L-methionine = 2-methyladenosine(2503) in 23S rRNA + 5'-deoxyadenosine + L-methionine + 2 oxidized [2Fe-2S]-[ferredoxin] + S-adenosyl-L-homocysteine. It catalyses the reaction adenosine(37) in tRNA + 2 reduced [2Fe-2S]-[ferredoxin] + 2 S-adenosyl-L-methionine = 2-methyladenosine(37) in tRNA + 5'-deoxyadenosine + L-methionine + 2 oxidized [2Fe-2S]-[ferredoxin] + S-adenosyl-L-homocysteine. In terms of biological role, specifically methylates position 2 of adenine 2503 in 23S rRNA and position 2 of adenine 37 in tRNAs. m2A2503 modification seems to play a crucial role in the proofreading step occurring at the peptidyl transferase center and thus would serve to optimize ribosomal fidelity. In Polaromonas sp. (strain JS666 / ATCC BAA-500), this protein is Dual-specificity RNA methyltransferase RlmN.